Consider the following 694-residue polypeptide: Elongation factor G (694 aa).

The 276-residue stretch at 10–285 (EKTRNIGIMA…GVVDYLPSPL (276 aa)) folds into the tr-type G domain. GTP contacts are provided by residues 19–26 (AHIDAGKT), 83–87 (DTPGH), and 137–140 (NKMD).

The protein belongs to the TRAFAC class translation factor GTPase superfamily. Classic translation factor GTPase family. EF-G/EF-2 subfamily.

The protein resides in the cytoplasm. Its function is as follows. Catalyzes the GTP-dependent ribosomal translocation step during translation elongation. During this step, the ribosome changes from the pre-translocational (PRE) to the post-translocational (POST) state as the newly formed A-site-bound peptidyl-tRNA and P-site-bound deacylated tRNA move to the P and E sites, respectively. Catalyzes the coordinated movement of the two tRNA molecules, the mRNA and conformational changes in the ribosome. This chain is Elongation factor G, found in Lactobacillus delbrueckii subsp. bulgaricus (strain ATCC BAA-365 / Lb-18).